The chain runs to 124 residues: Small ribosomal subunit protein uS13 (124 aa).

The interval 87-124 is disordered; sequence GSYRGNRHRKRLPVRGQRTKTNSRTRKGKRRTVGSKTK. Residues 91–124 show a composition bias toward basic residues; the sequence is GNRHRKRLPVRGQRTKTNSRTRKGKRRTVGSKTK.

The protein belongs to the universal ribosomal protein uS13 family. As to quaternary structure, part of the 30S ribosomal subunit. Forms a loose heterodimer with protein S19. Forms two bridges to the 50S subunit in the 70S ribosome.

Functionally, located at the top of the head of the 30S subunit, it contacts several helices of the 16S rRNA. In the 70S ribosome it contacts the 23S rRNA (bridge B1a) and protein L5 of the 50S subunit (bridge B1b), connecting the 2 subunits; these bridges are implicated in subunit movement. Contacts the tRNAs in the A and P-sites. The polypeptide is Small ribosomal subunit protein uS13 (Elusimicrobium minutum (strain Pei191)).